Here is a 289-residue protein sequence, read N- to C-terminus: Acetylglutamate kinase (289 aa).

Substrate contacts are provided by residues 60-61 (GG), Arg82, and Asn186.

It belongs to the acetylglutamate kinase family. ArgB subfamily.

It localises to the cytoplasm. It carries out the reaction N-acetyl-L-glutamate + ATP = N-acetyl-L-glutamyl 5-phosphate + ADP. It functions in the pathway amino-acid biosynthesis; L-arginine biosynthesis; N(2)-acetyl-L-ornithine from L-glutamate: step 2/4. Catalyzes the ATP-dependent phosphorylation of N-acetyl-L-glutamate. The polypeptide is Acetylglutamate kinase (Methanoculleus marisnigri (strain ATCC 35101 / DSM 1498 / JR1)).